Reading from the N-terminus, the 407-residue chain is Arginine biosynthesis bifunctional protein ArgJ (407 aa).

Residues T157, K183, T194, E280, N402, and T407 each coordinate substrate. T194 functions as the Nucleophile in the catalytic mechanism.

This sequence belongs to the ArgJ family. In terms of assembly, heterotetramer of two alpha and two beta chains.

It is found in the cytoplasm. The catalysed reaction is N(2)-acetyl-L-ornithine + L-glutamate = N-acetyl-L-glutamate + L-ornithine. It catalyses the reaction L-glutamate + acetyl-CoA = N-acetyl-L-glutamate + CoA + H(+). It functions in the pathway amino-acid biosynthesis; L-arginine biosynthesis; L-ornithine and N-acetyl-L-glutamate from L-glutamate and N(2)-acetyl-L-ornithine (cyclic): step 1/1. It participates in amino-acid biosynthesis; L-arginine biosynthesis; N(2)-acetyl-L-ornithine from L-glutamate: step 1/4. In terms of biological role, catalyzes two activities which are involved in the cyclic version of arginine biosynthesis: the synthesis of N-acetylglutamate from glutamate and acetyl-CoA as the acetyl donor, and of ornithine by transacetylation between N(2)-acetylornithine and glutamate. The polypeptide is Arginine biosynthesis bifunctional protein ArgJ (Oceanobacillus iheyensis (strain DSM 14371 / CIP 107618 / JCM 11309 / KCTC 3954 / HTE831)).